The chain runs to 1551 residues: MASSAPSSSSCTFQAESSFGPAVASCRRAFDFTLYFEEVVFVLVPSCVFILLAATRLLFILRRARRFTTATAATTTSTDTSSSHSCGNAAQNQHTPIGHGLAHHHILQQCTAGLLVTLHVAGLILLCTTVPSRQRTDLSVPASVVAALAFGVVPVLAHFEHKRRRPSSGPRSSSLLVGLFLCVAVLLRAPLVRTHAALYGSGSALVAVEIASLVLQLVLIAVGEVSSWAADATSNFSPEESAGFLGRSFGSWLWGTFVTGYRTTLSLDSLVPIDSSLESRIVATSFDHILPVSPSGKPGKNGQYRLLLALFRSLGLYALAPVIPRLCLAGFTLAQPFLASATINYIGNGPAPDRDGYGLIGATFLIYTGIAVSTGWYWSLSYKNVTKIRGGLVDGVSQKMLRLSQQHGTESKVLTMMINDVYRITSTLAYAHELWVAPIETAIGTWMLCRHVGPPGLVVLGIIGVCLGASTYVGKHMAIQQGVWLAAVERRIGATKKMLASIKAIKMMGAGPSVAEALERLRRLEFAASRKFRALIVGTLLSSYSTATLAPVLVFGTYIGATTAAADFSASTLFTSLIWISLLASPLIQLLQIIPSFGAALGSLERIDAFFEKQEFTDERDEATAVDSSCSEKGEKKKEHVSLSIHNSSFSYTDDSEDSILKDVNLVINRGQHVVVTGPAGCGKSLLLQAILGEVAPQNSGSRVCVDGKVAFCSQTPWLENLSARQVVSRFSRDKDPSWTDRVVDACELREFLEAQDPDATIGSQGSALARAIQSRPDILLLDDVLSPIDYVTKKRILRQLFGKSGILHETGTTVFQVTQDHAVAQLADIVLRLDETGALRPYQFPPSQADVEDENGDVDNGAENTRPRESSHTTEAQSGPPEPKSKPTEITDRKVYATYFESIGFLNLVLFIGGGIIFAFCLKFPNVWVGWWTADSSDPDEASHNIGYWFGIYAMLNVLPLIAVAGWVAQLMMLIVPLSGSKLHRKLVDTVSKATFSFISRVDTGSLLNRFNQDLMFVDSRLPLDLFNTAAALLTGIAQVILIGVSAVYVLASIPVLAAVLFLLQHFYLRTSKQLRHLDLQSKAELHTRLSESYQGLATIRAARWQRQVHAEFQAGLDRSQAPVYLLWTVQTWLKLVLNLVVAGLALVVMGAAVGLHQHGSSSGASASASGIGIAFLNLTTLGETMTNLLTAWTSLETTLGAIARMVSFSRDTPAERDVLVRPDSLDHGGGGGGDRAEPPESWPESGGIKLEGVWATYDDDDESDENTDDSGGRPATDVAADGEKHEATTITTTSSTMTTTRYALQDISLEVRPGERVAVCGRTGSGKSTLLLALLGLVAVRRGRISIDGRDVAGVPRARLRGAVHVIPQDPFISVASGNGETIREALDPAGKLGDEEVTDVLQDCGVLDKIVGAGGLAASVSDEALSLSAGERQLFVLARLICRAGGRCRHGGGGILLLDEATSSLDVNTDGKTAEVLRKWLPNMTVLSVLHRLEAALKYDRVVVLEGGRVAHVVTPSESTVSSDIFAFFGRSRSFLESRETGGVSWLE.

A run of 7 helical transmembrane segments spans residues 34-54 (LYFE…LLAA), 110-130 (CTAG…CTTV), 139-159 (SVPA…LAHF), 172-192 (SSSL…APLV), 202-222 (GSAL…LIAV), 314-334 (LGLY…FTLA), and 358-378 (GLIG…GWYW). An ABC transmembrane type-1 1 domain is found at 326–599 (LCLAGFTLAQ…LLQIIPSFGA (274 aa)). A glycan (N-linked (GlcNAc...) asparagine) is linked at asparagine 384. Helical transmembrane passes span 428 to 448 (LAYA…TWML), 452 to 472 (VGPP…ASTY), 535 to 555 (LIVG…VLVF), and 577 to 597 (LIWI…IPSF). One can recognise an ABC transporter 1 domain in the interval 645 to 861 (IHNSSFSYTD…VEDENGDVDN (217 aa)). Asparagine 647 carries N-linked (GlcNAc...) asparagine glycosylation. 678-685 (GPAGCGKS) contributes to the ATP binding site. A glycan (N-linked (GlcNAc...) asparagine) is linked at asparagine 721. The disordered stretch occupies residues 843–889 (YQFPPSQADVEDENGDVDNGAENTRPRESSHTTEAQSGPPEPKSKPT). 4 helical membrane-spanning segments follow: residues 903–923 (SIGF…AFCL), 959–979 (VLPL…IVPL), 1027–1044 (LFNT…VILI), and 1137–1157 (LVLN…AVGL). The ABC transmembrane type-1 2 domain maps to 910–1199 (VLFIGGGIIF…LLTAWTSLET (290 aa)). Asparagine 1179 is a glycosylation site (N-linked (GlcNAc...) asparagine). Residues 1219–1228 (DVLVRPDSLD) show a composition bias toward basic and acidic residues. Positions 1219 to 1296 (DVLVRPDSLD…HEATTITTTS (78 aa)) are disordered. Acidic residues predominate over residues 1259–1270 (YDDDDESDENTD). The 249-residue stretch at 1287–1535 (HEATTITTTS…SDIFAFFGRS (249 aa)) folds into the ABC transporter 2 domain. 1323-1330 (GRTGSGKS) lines the ATP pocket. A glycan (N-linked (GlcNAc...) asparagine) is linked at asparagine 1486.

This sequence belongs to the ABC transporter superfamily. ABCC family. Conjugate transporter (TC 3.A.1.208) subfamily.

It is found in the membrane. In terms of biological role, ABC-type transporter; part of the gene cluster that mediates the biosynthesis of the phomopsins, a group of hexapeptide mycotoxins which infects lupins and causes lupinosis disease in livestock. This is ABC-type transporter phomO from Diaporthe leptostromiformis (Lupinosis disease fungus).